Here is a 339-residue protein sequence, read N- to C-terminus: Phosphate acyltransferase (339 aa).

Belongs to the PlsX family. As to quaternary structure, homodimer. Probably interacts with PlsY.

Its subcellular location is the cytoplasm. The catalysed reaction is a fatty acyl-[ACP] + phosphate = an acyl phosphate + holo-[ACP]. The protein operates within lipid metabolism; phospholipid metabolism. Functionally, catalyzes the reversible formation of acyl-phosphate (acyl-PO(4)) from acyl-[acyl-carrier-protein] (acyl-ACP). This enzyme utilizes acyl-ACP as fatty acyl donor, but not acyl-CoA. The sequence is that of Phosphate acyltransferase from Aeromonas salmonicida (strain A449).